The sequence spans 242 residues: Endoglucanase (242 aa).

Positions 1 to 21 (MQVIVLPLVFLATFATSGSLA) are cleaved as a signal peptide. Catalysis depends on Asp47, which acts as the Nucleophile. 3 N-linked (GlcNAc...) asparagine glycosylation sites follow: Asn79, Asn103, and Asn217.

The protein belongs to the glycosyl hydrolase 45 (cellulase K) family. Expressed in larval carcasses and gut, and adult gut.

It is found in the secreted. The enzyme catalyses Endohydrolysis of (1-&gt;4)-beta-D-glucosidic linkages in cellulose, lichenin and cereal beta-D-glucans.. This is Endoglucanase from Phaedon cochleariae (Mustard beetle).